A 382-amino-acid chain; its full sequence is UDP-N-acetylglucosamine--N-acetylmuramyl-(pentapeptide) pyrophosphoryl-undecaprenol N-acetylglucosamine transferase (382 aa).

Residues 22–24, asparagine 134, arginine 186, serine 212, 285–290, and glutamine 311 each bind UDP-N-acetyl-alpha-D-glucosamine; these read TGG and ALTVAE.

Belongs to the glycosyltransferase 28 family. MurG subfamily.

It is found in the cell inner membrane. The catalysed reaction is di-trans,octa-cis-undecaprenyl diphospho-N-acetyl-alpha-D-muramoyl-L-alanyl-D-glutamyl-meso-2,6-diaminopimeloyl-D-alanyl-D-alanine + UDP-N-acetyl-alpha-D-glucosamine = di-trans,octa-cis-undecaprenyl diphospho-[N-acetyl-alpha-D-glucosaminyl-(1-&gt;4)]-N-acetyl-alpha-D-muramoyl-L-alanyl-D-glutamyl-meso-2,6-diaminopimeloyl-D-alanyl-D-alanine + UDP + H(+). Its pathway is cell wall biogenesis; peptidoglycan biosynthesis. Functionally, cell wall formation. Catalyzes the transfer of a GlcNAc subunit on undecaprenyl-pyrophosphoryl-MurNAc-pentapeptide (lipid intermediate I) to form undecaprenyl-pyrophosphoryl-MurNAc-(pentapeptide)GlcNAc (lipid intermediate II). The chain is UDP-N-acetylglucosamine--N-acetylmuramyl-(pentapeptide) pyrophosphoryl-undecaprenol N-acetylglucosamine transferase from Pseudoalteromonas atlantica (strain T6c / ATCC BAA-1087).